The following is a 348-amino-acid chain: Histidinol-phosphate aminotransferase (348 aa).

Residue Lys-210 is modified to N6-(pyridoxal phosphate)lysine.

The protein belongs to the class-II pyridoxal-phosphate-dependent aminotransferase family. Histidinol-phosphate aminotransferase subfamily. Homodimer. Pyridoxal 5'-phosphate serves as cofactor.

The enzyme catalyses L-histidinol phosphate + 2-oxoglutarate = 3-(imidazol-4-yl)-2-oxopropyl phosphate + L-glutamate. Its pathway is amino-acid biosynthesis; L-histidine biosynthesis; L-histidine from 5-phospho-alpha-D-ribose 1-diphosphate: step 7/9. This chain is Histidinol-phosphate aminotransferase, found in Pseudomonas putida (strain W619).